Reading from the N-terminus, the 311-residue chain is tRNA-cytidine(32) 2-sulfurtransferase (311 aa).

The PP-loop motif signature appears at 47 to 52; that stretch reads SGGKDS. [4Fe-4S] cluster contacts are provided by Cys-122, Cys-125, and Cys-213.

It belongs to the TtcA family. Homodimer. The cofactor is Mg(2+). [4Fe-4S] cluster is required as a cofactor.

The protein localises to the cytoplasm. The catalysed reaction is cytidine(32) in tRNA + S-sulfanyl-L-cysteinyl-[cysteine desulfurase] + AH2 + ATP = 2-thiocytidine(32) in tRNA + L-cysteinyl-[cysteine desulfurase] + A + AMP + diphosphate + H(+). The protein operates within tRNA modification. Functionally, catalyzes the ATP-dependent 2-thiolation of cytidine in position 32 of tRNA, to form 2-thiocytidine (s(2)C32). The sulfur atoms are provided by the cysteine/cysteine desulfurase (IscS) system. The polypeptide is tRNA-cytidine(32) 2-sulfurtransferase (Salmonella choleraesuis (strain SC-B67)).